Here is a 2646-residue protein sequence, read N- to C-terminus: Probable helicase senataxin (2646 aa).

Phosphoserine is present on serine 102. Lysine 339 is covalently cross-linked (Glycyl lysine isopeptide (Lys-Gly) (interchain with G-Cter in SUMO1)). The residue at position 640 (serine 640) is a Phosphoserine. Disordered stretches follow at residues 705–734 (KISA…WGCD) and 825–876 (GGAL…DDED). Positions 714–727 (ESSSYAPSNSTSRN) are enriched in polar residues. Residues 867–876 (LDNSSSDDED) are compositionally biased toward acidic residues. Residues serine 870, serine 871, serine 872, serine 938, serine 1002, and serine 1004 each carry the phosphoserine modification. Residues 1001–1023 (ISDSDEEEDEDEDERSSSEENIK) are disordered. Positions 1003-1014 (DSDEEEDEDEDE) are enriched in acidic residues. Lysine 1051 participates in a covalent cross-link: Glycyl lysine isopeptide (Lys-Gly) (interchain with G-Cter in SUMO2). The segment covering 1122 to 1133 (RNKAEGVKEHAG) has biased composition (basic and acidic residues). The disordered stretch occupies residues 1122–1245 (RNKAEGVKEH…DTRRGQSKSS (124 aa)). A compositionally biased stretch (basic residues) spans 1147-1156 (GVKKPKRKRY). Over residues 1176–1189 (LPDRRDLTESDLKS) the composition is skewed to basic and acidic residues. The segment covering 1196–1211 (TPSSSVERDSTILQKS) has biased composition (polar residues). Positions 1212–1222 (TKSRTHSKPVR) are enriched in basic residues. Serine 1318 carries the phosphoserine modification. Residues lysine 1328, lysine 1329, and lysine 1398 each participate in a glycyl lysine isopeptide (Lys-Gly) (interchain with G-Cter in SUMO2) cross-link. At serine 1472 the chain carries Phosphoserine. At threonine 1474 the chain carries Phosphothreonine. The interval 1591–1627 (LSKSLESTTLQQSALKNKSSGAQPNLKVTPPSSMGSQ) is disordered. The segment covering 1595-1613 (LESTTLQQSALKNKSSGAQ) has biased composition (polar residues). 1939–1946 (GPPGTGKS) serves as a coordination point for ATP. Positions 2046 to 2063 (KKDLPSHIQEMLRRKEIL) match the Bipartite nuclear localization signal motif. Threonine 2450 carries the phosphothreonine modification. 3 disordered regions span residues 2450–2472 (THPP…NRLD), 2486–2506 (HTPS…QDRL), and 2569–2624 (SHRS…THHV). 2 stretches are compositionally biased toward basic and acidic residues: residues 2496 to 2506 (GPERPLLQDRL) and 2593 to 2608 (KYSD…REPR). Residues 2632 to 2646 (RRRLDDSSAKRRQFL) are necessary for nuclear localization.

It belongs to the DNA2/NAM7 helicase family. In terms of assembly, homodimer. Interacts with PER2; the interaction inhibits termination of circadian target genes. Interacts with CHD4, POLR2A, PRKDC and TRIM28. Interacts with UBE2I. Interacts (via N-terminus domain) with EXOSC9 (via C-terminus region); the interaction enhances SETX sumoylation. Interacts with NCL (via N-terminus domain). Interacts with PABPN1, PABPC1 and SF3B1. Interacts with SMN1/SMN2 and POLR2A; SMN1/SMN2 recruits SETX to POLR2A. Post-translationally, ubiquitinated. Sumoylated preferentially with SUMO2 or SUMO3. Expressed in cerebellum, hippocampus, olfactory bulb, Bergmann glial fibers, stellate cells and Purkinje cells. Expressed in the epithelial cells of the lens but not in mature lens fiber cells. Expressed in the retina (highly expressed in inner and outer segments of photoreceptors and outer plexiform layer cells but weakly expressed in the inner plexiform and ganglion cell layers). Expressed in the kidney.

Its subcellular location is the nucleus. It is found in the nucleoplasm. The protein resides in the nucleolus. It localises to the cytoplasm. The protein localises to the chromosome. Its subcellular location is the telomere. It is found in the cell projection. The protein resides in the axon. It localises to the growth cone. Functionally, probable RNA/DNA helicase involved in diverse aspects of RNA metabolism and genomic integrity. Plays a role in transcription regulation by its ability to modulate RNA Polymerase II (Pol II) binding to chromatin and through its interaction with proteins involved in transcription. Contributes to the mRNA splicing efficiency and splice site selection. Required for the resolution of R-loop RNA-DNA hybrid formation at G-rich pause sites located downstream of the poly(A) site, allowing XRN2 recruitment and XRN2-mediated degradation of the downstream cleaved RNA and hence efficient RNA polymerase II (RNAp II) transcription termination. Required for the 3' transcriptional termination of PER1 and CRY2, thus playing an important role in the circadian rhythm regulation. Involved in DNA double-strand breaks damage response generated by oxidative stress. In association with RRP45, targets the RNA exosome complex to sites of transcription-induced DNA damage. Plays a role in the development and maturation of germ cells: essential for male meiosis, acting at the interface of transcription and meiotic recombination, and in the process of gene silencing during meiotic sex chromosome inactivation (MSCI). Plays a role in neurite outgrowth in hippocampal cells through FGF8-activated signaling pathways. Inhibits retinoic acid-induced apoptosis. May be involved in telomeric stability through the regulation of telomere repeat-containing RNA (TERRA) transcription. This Mus musculus (Mouse) protein is Probable helicase senataxin.